We begin with the raw amino-acid sequence, 253 residues long: Prepilin leader peptidase/N-methyltransferase (253 aa).

Residues 4–24 traverse the membrane as a helical segment; that stretch reads VYLILFSIVSLILGSFSNVVI. Zn(2+) is bound by residues cysteine 48, cysteine 51, cysteine 73, and cysteine 76. The next 6 membrane-spanning stretches (helical) occupy residues 80 to 100, 106 to 126, 129 to 149, 159 to 179, 198 to 218, and 230 to 250; these read ISLS…PIYW, VDSF…VIDF, MLLP…YVQQ, IIGG…VRLF, TLIG…IAFI, and CLYI…FFSI.

It belongs to the peptidase A24 family. Zn(2+) is required as a cofactor.

The protein localises to the cell inner membrane. The catalysed reaction is Typically cleaves a -Gly-|-Phe- bond to release an N-terminal, basic peptide of 5-8 residues from type IV prepilin, and then N-methylates the new N-terminal amino group, the methyl donor being S-adenosyl-L-methionine.. In terms of biological role, plays an essential role in type IV pili and type II pseudopili formation by proteolytically removing the leader sequence from substrate proteins and subsequently monomethylating the alpha-amino group of the newly exposed N-terminal phenylalanine. In Vibrio cholerae serotype O1 (strain ATCC 39315 / El Tor Inaba N16961), this protein is Prepilin leader peptidase/N-methyltransferase (tcpJ).